The sequence spans 582 residues: ATP-dependent lipid A-core flippase (582 aa).

Helical transmembrane passes span 16-36, 63-83, 153-173, 253-273, and 275-295; these read LWPM…ALIL, ILVW…VSGF, IIGL…ILVV, PLIQ…ASFP, and VMET…IALM. The ABC transmembrane type-1 domain maps to 28–310; sequence IVAAIALILN…LTNVNAQFQR (283 aa). The region spanning 342–578 is the ABC transporter domain; it reads IAFDHVTFSY…QGVYAQLHQL (237 aa). 376–383 lines the ATP pocket; the sequence is GRSGSGKS.

The protein belongs to the ABC transporter superfamily. Lipid exporter (TC 3.A.1.106) family. In terms of assembly, homodimer.

It localises to the cell inner membrane. It carries out the reaction ATP + H2O + lipid A-core oligosaccharideSide 1 = ADP + phosphate + lipid A-core oligosaccharideSide 2.. In terms of biological role, involved in lipopolysaccharide (LPS) biosynthesis. Translocates lipid A-core from the inner to the outer leaflet of the inner membrane. Transmembrane domains (TMD) form a pore in the inner membrane and the ATP-binding domain (NBD) is responsible for energy generation. This chain is ATP-dependent lipid A-core flippase, found in Sodalis glossinidius (strain morsitans).